A 283-amino-acid polypeptide reads, in one-letter code: Bifunctional protein FolD (283 aa).

Residues 165-167, S190, and I231 each bind NADP(+); that span reads GAS.

This sequence belongs to the tetrahydrofolate dehydrogenase/cyclohydrolase family. Homodimer.

It catalyses the reaction (6R)-5,10-methylene-5,6,7,8-tetrahydrofolate + NADP(+) = (6R)-5,10-methenyltetrahydrofolate + NADPH. It carries out the reaction (6R)-5,10-methenyltetrahydrofolate + H2O = (6R)-10-formyltetrahydrofolate + H(+). It functions in the pathway one-carbon metabolism; tetrahydrofolate interconversion. In terms of biological role, catalyzes the oxidation of 5,10-methylenetetrahydrofolate to 5,10-methenyltetrahydrofolate and then the hydrolysis of 5,10-methenyltetrahydrofolate to 10-formyltetrahydrofolate. The polypeptide is Bifunctional protein FolD (Bordetella bronchiseptica (strain ATCC BAA-588 / NCTC 13252 / RB50) (Alcaligenes bronchisepticus)).